The primary structure comprises 271 residues: Interleukin-1 alpha (271 aa).

Residues 1-112 constitute a propeptide that is removed on maturation; the sequence is MAKVPDMFED…DSEEEIIKPR (112 aa). An N6-acetyllysine modification is found at Lys82. The interval 82–86 is nuclear localization signal (NLS); that stretch reads KKRRL. The residue at position 87 (Ser87) is a Phosphoserine. N-linked (GlcNAc...) asparagine glycosylation is found at Asn102 and Asn141.

The protein belongs to the IL-1 family. In terms of assembly, monomer. Interacts with TMED10; the interaction mediates the translocation from the cytoplasm into the ERGIC (endoplasmic reticulum-Golgi intermediate compartment) and thereby secretion. Interacts with IL1R1. Interacts with S100A13; this interaction is the first step in the export of IL1A, followed by direct translocation of this complex across the plasma membrane. In terms of processing, acetylated within its nuclear localization sequence, which impacts subcellular localization. Post-translationally, proteolytic processed by CAPN1 in a calcium-dependent manner. Cleavage from 31 kDa precursor to 18 kDa biologically active molecules. Phosphorylated. Phosphorylation greatly enhances susceptibility to digestion and promotes the conversion of pre-IL1A alpha to the biologically active IL1A.

The protein resides in the nucleus. The protein localises to the cytoplasm. It is found in the secreted. Cytokine constitutively present intracellularly in nearly all resting non-hematopoietic cells that plays an important role in inflammation and bridges the innate and adaptive immune systems. After binding to its receptor IL1R1 together with its accessory protein IL1RAP, forms the high affinity interleukin-1 receptor complex. Signaling involves the recruitment of adapter molecules such as MYD88, IRAK1 or IRAK4. In turn, mediates the activation of NF-kappa-B and the three MAPK pathways p38, p42/p44 and JNK pathways. Within the cell, acts as an alarmin and cell death results in its liberation in the extracellular space after disruption of the cell membrane to induce inflammation and alert the host to injury or damage. In addition to its role as a danger signal, which occurs when the cytokine is passively released by cell necrosis, directly senses DNA damage and acts as signal for genotoxic stress without loss of cell integrity. This Cercocebus atys (Sooty mangabey) protein is Interleukin-1 alpha (IL1A).